The following is a 188-amino-acid chain: dCTP deaminase (188 aa).

Residue 109–114 coordinates dCTP; the sequence is KSTYAR. Residue glutamate 135 is the Proton donor/acceptor of the active site. DCTP is bound by residues glutamine 154, tyrosine 168, and glutamine 178.

It belongs to the dCTP deaminase family. In terms of assembly, homotrimer.

The catalysed reaction is dCTP + H2O + H(+) = dUTP + NH4(+). Its pathway is pyrimidine metabolism; dUMP biosynthesis; dUMP from dCTP (dUTP route): step 1/2. Functionally, catalyzes the deamination of dCTP to dUTP. The sequence is that of dCTP deaminase from Helicobacter pylori (strain J99 / ATCC 700824) (Campylobacter pylori J99).